Here is a 126-residue protein sequence, read N- to C-terminus: Small ribosomal subunit protein uS13 (126 aa).

A disordered region spans residues 91 to 126 (RHRRGLPVRGQRTSTNARTRKGPRRAIAGKKKPGKK). Residues 108 to 126 (RTRKGPRRAIAGKKKPGKK) are compositionally biased toward basic residues.

It belongs to the universal ribosomal protein uS13 family. As to quaternary structure, part of the 30S ribosomal subunit. Forms a loose heterodimer with protein S19. Forms two bridges to the 50S subunit in the 70S ribosome.

In terms of biological role, located at the top of the head of the 30S subunit, it contacts several helices of the 16S rRNA. In the 70S ribosome it contacts the 23S rRNA (bridge B1a) and protein L5 of the 50S subunit (bridge B1b), connecting the 2 subunits; these bridges are implicated in subunit movement. Contacts the tRNAs in the A and P-sites. In Streptomyces coelicolor (strain ATCC BAA-471 / A3(2) / M145), this protein is Small ribosomal subunit protein uS13.